We begin with the raw amino-acid sequence, 138 residues long: Large ribosomal subunit protein uL16 (138 aa).

Over residues 1 to 17 (MLIPRKVKHRKQHHPRQ) the composition is skewed to basic residues. The disordered stretch occupies residues 1–23 (MLIPRKVKHRKQHHPRQRGIASG).

It belongs to the universal ribosomal protein uL16 family. In terms of assembly, part of the 50S ribosomal subunit.

Binds 23S rRNA and is also seen to make contacts with the A and possibly P site tRNAs. This Mycobacterium sp. (strain JLS) protein is Large ribosomal subunit protein uL16.